The following is a 199-amino-acid chain: Fe/S biogenesis protein NfuA (199 aa).

Residues Cys151 and Cys154 each contribute to the [4Fe-4S] cluster site.

This sequence belongs to the NfuA family. In terms of assembly, homodimer. It depends on [4Fe-4S] cluster as a cofactor.

Involved in iron-sulfur cluster biogenesis. Binds a 4Fe-4S cluster, can transfer this cluster to apoproteins, and thereby intervenes in the maturation of Fe/S proteins. Could also act as a scaffold/chaperone for damaged Fe/S proteins. This Xanthomonas oryzae pv. oryzae (strain PXO99A) protein is Fe/S biogenesis protein NfuA.